A 310-amino-acid polypeptide reads, in one-letter code: Small ribosomal subunit biogenesis GTPase RsgA (310 aa).

The CP-type G domain occupies 77–236 (KNELKRPNIA…IADTPGFSKL (160 aa)). Residues 126-129 (SKID) and 179-187 (GQTGVGKST) contribute to the GTP site. Zn(2+) contacts are provided by Cys-260, Cys-266, His-268, and Cys-274.

It belongs to the TRAFAC class YlqF/YawG GTPase family. RsgA subfamily. As to quaternary structure, monomer. Associates with 30S ribosomal subunit, binds 16S rRNA. Requires Zn(2+) as cofactor.

The protein localises to the cytoplasm. Functionally, one of several proteins that assist in the late maturation steps of the functional core of the 30S ribosomal subunit. Helps release RbfA from mature subunits. May play a role in the assembly of ribosomal proteins into the subunit. Circularly permuted GTPase that catalyzes slow GTP hydrolysis, GTPase activity is stimulated by the 30S ribosomal subunit. The polypeptide is Small ribosomal subunit biogenesis GTPase RsgA (Phytoplasma australiense).